Reading from the N-terminus, the 462-residue chain is Argininosuccinate lyase (462 aa).

It belongs to the lyase 1 family. Argininosuccinate lyase subfamily.

It is found in the cytoplasm. It catalyses the reaction 2-(N(omega)-L-arginino)succinate = fumarate + L-arginine. It participates in amino-acid biosynthesis; L-arginine biosynthesis; L-arginine from L-ornithine and carbamoyl phosphate: step 3/3. The sequence is that of Argininosuccinate lyase from Streptococcus agalactiae serotype Ia (strain ATCC 27591 / A909 / CDC SS700).